The primary structure comprises 284 residues: Bifunctional protein FolD (284 aa).

NADP(+) is bound by residues 166–168, S191, and I232; that span reads GAS.

Belongs to the tetrahydrofolate dehydrogenase/cyclohydrolase family. As to quaternary structure, homodimer.

It carries out the reaction (6R)-5,10-methylene-5,6,7,8-tetrahydrofolate + NADP(+) = (6R)-5,10-methenyltetrahydrofolate + NADPH. The catalysed reaction is (6R)-5,10-methenyltetrahydrofolate + H2O = (6R)-10-formyltetrahydrofolate + H(+). It participates in one-carbon metabolism; tetrahydrofolate interconversion. Functionally, catalyzes the oxidation of 5,10-methylenetetrahydrofolate to 5,10-methenyltetrahydrofolate and then the hydrolysis of 5,10-methenyltetrahydrofolate to 10-formyltetrahydrofolate. The sequence is that of Bifunctional protein FolD from Neisseria meningitidis serogroup A / serotype 4A (strain DSM 15465 / Z2491).